Consider the following 284-residue polypeptide: Nucleotide-binding protein Shewmr7_3352 (284 aa).

Residue 8–15 coordinates ATP; it reads GRSGSGKS. 56–59 contributes to the GTP binding site; the sequence is DVRN.

This sequence belongs to the RapZ-like family.

Its function is as follows. Displays ATPase and GTPase activities. This Shewanella sp. (strain MR-7) protein is Nucleotide-binding protein Shewmr7_3352.